A 465-amino-acid polypeptide reads, in one-letter code: Gamma-aminobutyric acid receptor subunit rho-2 (465 aa).

The signal sequence occupies residues M1–S20. Over R21–H260 the chain is Extracellular. R105 contributes to the 4-aminobutanoate binding site. N120 carries N-linked (GlcNAc...) asparagine glycosylation. Residue S169 coordinates 4-aminobutanoate. A disulfide bond links C178 and C192. E197 provides a ligand contact to 4-aminobutanoate. N-linked (GlcNAc...) asparagine glycosylation is present at N254. The helical transmembrane segment at I261–V281 threads the bilayer. Over S282–R293 the chain is Cytoplasmic. Residues V294–S314 form a helical membrane-spanning segment. The Extracellular portion of the chain corresponds to M315–D325. The chain crosses the membrane as a helical span at residues I326–N346. Residues Y347–Y444 lie on the Cytoplasmic side of the membrane. Residues S445 to A465 traverse the membrane as a helical segment.

It belongs to the ligand-gated ion channel (TC 1.A.9) family. Gamma-aminobutyric acid receptor (TC 1.A.9.5) subfamily. GABRR2 sub-subfamily. In terms of assembly, three rho subunits (rho-1/GBRR1, rho-2/GBRR2 and rho-3/GBRR3) coassemble either to form functional homopentamers or heteropentamers. Rho-2 is unable to form a functional homopentamer. Interacts with SQSTM1.

The protein localises to the postsynaptic cell membrane. It is found in the cell membrane. The enzyme catalyses chloride(in) = chloride(out). Rho subunit of the pentameric ligand-gated chloride channels responsible for mediating the effects of gamma-aminobutyric acid (GABA), the major inhibitory neurotransmitter in the brain. Rho-containing GABA-gated chloride channels are a subclass of GABA(A) receptors (GABAARs) entirely composed of rho subunits, where GABA molecules bind at the rho intersubunit interfaces. When activated by GABA, rho-GABAARs selectively allow the flow of chloride anions across the cell membrane down their electrochemical gradient. Rho-2 GABAARs may contribute to the regulation of glial development in the cerebellum by controlling extrasynaptic transmission. Rho-2 GABAARs are also involved in neuronal tonic (extrasynaptic) and phasic (synaptic) transmission in the Purkinje neurons of the cerebellum. Rho-2 GABAARs expressed in retina may play a role in retinal neurotransmission. This Bos taurus (Bovine) protein is Gamma-aminobutyric acid receptor subunit rho-2 (GABRR2).